A 603-amino-acid polypeptide reads, in one-letter code: Autophagy-related protein 22 (603 aa).

Helical transmembrane passes span 46–66 (YGWA…PITL), 122–142 (TASF…VLII), 157–177 (FLLA…FLLP), and 181–201 (LLAA…FVLL). Asn254 is a glycosylation site (N-linked (GlcNAc...) asparagine). 8 consecutive transmembrane segments (helical) span residues 274–294 (IGIG…LVVA), 304–324 (LVLF…ALWL), 342–362 (WAWV…IVRA), 368–388 (VLLF…VSGT), 401–421 (IAAL…GAFS), 439–459 (ACIC…LPFI), 464–484 (VIGL…GLVL), and 539–559 (AFGF…LVDV). N-linked (GlcNAc...) asparagine glycosylation is present at Asn582.

The protein belongs to the ATG22 family.

The protein localises to the vacuole membrane. Its function is as follows. Vacuolar effluxer which mediate the efflux of amino acids resulting from autophagic degradation. The release of autophagic amino acids allows the maintenance of protein synthesis and viability during nitrogen starvation. The sequence is that of Autophagy-related protein 22 (ATG22) from Coccidioides immitis (strain RS) (Valley fever fungus).